Here is a 523-residue protein sequence, read N- to C-terminus: Peptide chain release factor 3 (523 aa).

Residues 10-277 (NKRRTFAIIS…QFVDLAPAPG (268 aa)) form the tr-type G domain. GTP is bound by residues 19–26 (SHPDAGKT), 87–91 (DTPGH), and 141–144 (NKLD).

The protein belongs to the TRAFAC class translation factor GTPase superfamily. Classic translation factor GTPase family. PrfC subfamily.

The protein localises to the cytoplasm. Functionally, increases the formation of ribosomal termination complexes and stimulates activities of RF-1 and RF-2. It binds guanine nucleotides and has strong preference for UGA stop codons. It may interact directly with the ribosome. The stimulation of RF-1 and RF-2 is significantly reduced by GTP and GDP, but not by GMP. This is Peptide chain release factor 3 from Lactobacillus delbrueckii subsp. bulgaricus (strain ATCC BAA-365 / Lb-18).